The primary structure comprises 128 residues: Small ribosomal subunit protein uS8c (128 aa).

This sequence belongs to the universal ribosomal protein uS8 family. Part of the 30S ribosomal subunit.

It is found in the plastid. The protein localises to the chloroplast. One of the primary rRNA binding proteins, it binds directly to 16S rRNA central domain where it helps coordinate assembly of the platform of the 30S subunit. This is Small ribosomal subunit protein uS8c (rps8) from Gnetum parvifolium (Small-leaved jointfir).